Consider the following 105-residue polypeptide: Structural protein 11 (105 aa).

A coiled-coil region spans residues 59-97 (NLIKSIQRARDVSEGEARELKDDMVTELEKAETKEERRD).

It localises to the virion. The chain is Structural protein 11 from His1 virus (isolate Australia/Victoria) (His1V).